The primary structure comprises 93 residues: Small ribosomal subunit protein bS6 (93 aa).

The protein belongs to the bacterial ribosomal protein bS6 family.

Binds together with bS18 to 16S ribosomal RNA. This Treponema pallidum (strain Nichols) protein is Small ribosomal subunit protein bS6 (rpsF).